Consider the following 93-residue polypeptide: MFCVIYRSTKREQTYLYVEKKDDFSRVPDELMRSFGTPQMAMLLPLDGRKKLVNADLEKVKQALSEQGYYLQLPPPSENLLKKHLAEQGKQSD.

The YcgL domain maps to 1-85 (MFCVIYRSTK…PSENLLKKHL (85 aa)).

This chain is YcgL domain-containing protein KPN78578_22820, found in Klebsiella pneumoniae subsp. pneumoniae (strain ATCC 700721 / MGH 78578).